Here is a 320-residue protein sequence, read N- to C-terminus: NAD kinase (320 aa).

The active-site Proton acceptor is Asp96. NAD(+) is bound by residues 96-97, Arg101, 170-171, Asp200, and 211-216; these read DG, NE, and TAYAFS.

The protein belongs to the NAD kinase family. The cofactor is a divalent metal cation.

The protein resides in the cytoplasm. The enzyme catalyses NAD(+) + ATP = ADP + NADP(+) + H(+). Functionally, involved in the regulation of the intracellular balance of NAD and NADP, and is a key enzyme in the biosynthesis of NADP. Catalyzes specifically the phosphorylation on 2'-hydroxyl of the adenosine moiety of NAD to yield NADP. The sequence is that of NAD kinase from Rhodococcus opacus (strain B4).